The primary structure comprises 200 residues: Holliday junction branch migration complex subunit RuvA (200 aa).

A domain I region spans residues 1–65 (MYEYIKGTLT…ETEHVLYGFS (65 aa)). Residues 66 to 144 (SRAEKECFRL…TLMPLYLEEP (79 aa)) form a domain II region. The interval 145 to 149 (VVPSS) is flexible linker. Residues 150–200 (TANSSFKEGIGALMNLGFSRLAADRMMTEAVKELSEEASVAELLPIALRKS) form a domain III region.

It belongs to the RuvA family. As to quaternary structure, homotetramer. Forms an RuvA(8)-RuvB(12)-Holliday junction (HJ) complex. HJ DNA is sandwiched between 2 RuvA tetramers; dsDNA enters through RuvA and exits via RuvB. An RuvB hexamer assembles on each DNA strand where it exits the tetramer. Each RuvB hexamer is contacted by two RuvA subunits (via domain III) on 2 adjacent RuvB subunits; this complex drives branch migration. In the full resolvosome a probable DNA-RuvA(4)-RuvB(12)-RuvC(2) complex forms which resolves the HJ.

Its subcellular location is the cytoplasm. Its function is as follows. The RuvA-RuvB-RuvC complex processes Holliday junction (HJ) DNA during genetic recombination and DNA repair, while the RuvA-RuvB complex plays an important role in the rescue of blocked DNA replication forks via replication fork reversal (RFR). RuvA specifically binds to HJ cruciform DNA, conferring on it an open structure. The RuvB hexamer acts as an ATP-dependent pump, pulling dsDNA into and through the RuvAB complex. HJ branch migration allows RuvC to scan DNA until it finds its consensus sequence, where it cleaves and resolves the cruciform DNA. This chain is Holliday junction branch migration complex subunit RuvA, found in Chlamydia trachomatis serovar A (strain ATCC VR-571B / DSM 19440 / HAR-13).